Reading from the N-terminus, the 134-residue chain is Small ribosomal subunit protein uS11 (134 aa).

The protein belongs to the universal ribosomal protein uS11 family. In terms of assembly, part of the 30S ribosomal subunit. Interacts with proteins S7 and S18. Binds to IF-3.

Functionally, located on the platform of the 30S subunit, it bridges several disparate RNA helices of the 16S rRNA. Forms part of the Shine-Dalgarno cleft in the 70S ribosome. This Herminiimonas arsenicoxydans protein is Small ribosomal subunit protein uS11.